An 812-amino-acid chain; its full sequence is Lon protease (812 aa).

The 194-residue stretch at 12–205 folds into the Lon N-terminal domain; it reads LPMLPLRGVL…YLCELLAKEM (194 aa). 357–364 lines the ATP pocket; the sequence is GPPGVGKT. The region spanning 593-774 is the Lon proteolytic domain; sequence ENQVGVATGL…DEVLEETLLK (182 aa). Residues Ser680 and Lys723 contribute to the active site.

This sequence belongs to the peptidase S16 family. As to quaternary structure, homohexamer. Organized in a ring with a central cavity.

It is found in the cytoplasm. The enzyme catalyses Hydrolysis of proteins in presence of ATP.. Its function is as follows. ATP-dependent serine protease that mediates the selective degradation of mutant and abnormal proteins as well as certain short-lived regulatory proteins. Required for cellular homeostasis and for survival from DNA damage and developmental changes induced by stress. Degrades polypeptides processively to yield small peptide fragments that are 5 to 10 amino acids long. Binds to DNA in a double-stranded, site-specific manner. The chain is Lon protease from Syntrophomonas wolfei subsp. wolfei (strain DSM 2245B / Goettingen).